The chain runs to 119 residues: Beta-2-microglobulin (119 aa).

A signal peptide spans 1–20 (MARFVVAALLVLLSLSGLEA). Residues 25–114 (PKIQVYSRHP…MTFPAPKTVK (90 aa)) enclose the Ig-like C1-type domain. A disulfide bridge links C45 with C100.

It belongs to the beta-2-microglobulin family. Heterodimer of an alpha chain and a beta chain. Beta-2-microglobulin is the beta-chain of major histocompatibility complex class I molecules.

Its subcellular location is the secreted. Functionally, component of the class I major histocompatibility complex (MHC). Involved in the presentation of peptide antigens to the immune system. The sequence is that of Beta-2-microglobulin (B2M) from Pithecia irrorata (Gray monk saki).